We begin with the raw amino-acid sequence, 64 residues long: Kappa-lycotoxin-Os1a (64 aa).

Cystine bridges form between cysteine 10–cysteine 26, cysteine 17–cysteine 56, cysteine 19–cysteine 42, and cysteine 28–cysteine 40.

This sequence belongs to the neurotoxin 04 (omega-agtx) family. 01 (type I omega-agtx) subfamily. In terms of tissue distribution, expressed by the venom gland.

It is found in the secreted. In terms of biological role, insecticidal to house crickets. It induces an excitatory slow-onset impact that leads to irreversible spastic paralysis. It also modifies human voltage-gated potassium channel Kv1.5/KCNA5. Most likely, it binds to the voltage-sensing domain of the channel, suggesting it does not block the pore but prevents its opening at physiological membrane potentials. The recombinant peptide binds to the channel in an irreversible manner and slows down the hKv1.5 current activation kinetics. It is not toxic to mice, when intracranially injected (at 0.5 ug/g mouse). This is Kappa-lycotoxin-Os1a from Oculicosa supermirabilis (Central Asian wolf-spider).